The sequence spans 219 residues: Izumo sperm-egg fusion protein 4 (219 aa).

An N-terminal signal peptide occupies residues 1–15 (MALLLCLVGVTAALA). Asn-206 carries an N-linked (GlcNAc...) asparagine glycan.

It belongs to the Izumo family.

The protein resides in the secreted. The chain is Izumo sperm-egg fusion protein 4 (IZUMO4) from Macaca fascicularis (Crab-eating macaque).